A 93-amino-acid polypeptide reads, in one-letter code: UPF0223 protein str0998 (93 aa).

The protein belongs to the UPF0223 family.

The sequence is that of UPF0223 protein str0998 from Streptococcus thermophilus (strain CNRZ 1066).